The chain runs to 318 residues: 5'-3' exonuclease (318 aa).

The region spanning 194–278 (AYAELALLRG…ATDAPVTLST (85 aa)) is the 5'-3' exonuclease domain.

5'-3' exonuclease acting preferentially on double-stranded DNA. The sequence is that of 5'-3' exonuclease from Mycobacterium tuberculosis (strain ATCC 25618 / H37Rv).